The following is a 360-amino-acid chain: Venom serine protease Bi-VSP (360 aa).

Residues 1 to 26 (MTGSKMLFACLALIAFLHPLVHVASA) form the signal peptide. Positions 27–113 (QECTTPNNKA…CGFSNVSHTR (87 aa)) are excised as a propeptide. A Clip domain is found at 28-79 (ECTTPNNKAGKCLGIRVCKPLLEMLQTQGHAAADFLRQSVCKYENNNPIVCC). Intrachain disulfides connect cysteine 29-cysteine 78, cysteine 39-cysteine 68, cysteine 45-cysteine 79, cysteine 104-cysteine 230, cysteine 147-cysteine 163, cysteine 278-cysteine 296, and cysteine 307-cysteine 335. The N-linked (GlcNAc...) asparagine glycan is linked to asparagine 108. A Peptidase S1 domain is found at 114–360 (VVGGKPAVLG…LDDFILPAMQ (247 aa)). Catalysis depends on histidine 162, which acts as the Charge relay system. Residues aspartate 176, asparagine 178, arginine 181, and aspartate 184 each contribute to the Ca(2+) site. Aspartate 210 acts as the Charge relay system in catalysis. The Charge relay system role is filled by serine 311.

The protein belongs to the peptidase S1 family. CLIP subfamily. In terms of tissue distribution, expressed by the venom gland.

It localises to the secreted. Multifunctional venom serine protease. In insects, it acts as an arthropod prophenoloxidase-activating factor, thereby triggering the phenoloxidase cascade. When injected into larvae, it induces a lethal melanization response in target insects by modulating the innate immune response. In mammals, it converts fibrinogen into fibrin, activates prothrombin, and also degrades fibrin. In mammal, it may act in a cooperative manner with the serine protease inhibitor Bi-KTI (AC G3LH89) to promote the spread of bee venom under anti-bleeding conditions. This is Venom serine protease Bi-VSP from Bombus ignitus (Bumblebee).